The primary structure comprises 404 residues: MSTIKVIEVYTQNGLRKVRPYYNRRSAFVKGRWLGKLLIDVLVSEFKLRPRAYYLDQIRKGTYRLIRDGVPLVPDHLMTTIIKNHDVLETTTHKHEPPVKQWCSQEVEAEDLPGRIAGFNIVFEDESILVIDKPSGIPVHPTGQFYQNTITELLKLHGVDALPCYRLDKITSGLLILAKNSQSAGEIQKSIRSRDMIKIYLARVKGRFPHSELILDNENAAETTFEDTSKVTVEMTPIYSIDPKRQFPVGLSTSKDAITKFYPIRYFSHADETVVACKPITGRTHQIRIHLARLGHPIVNDSVYCSHITKYPERLKFITQFPRWENQQDLDAEELKVRFQKFVDETKNNCRTMETFCPECHTVDLKDPVLSDLELWLHAWKYEEINGKFKFKTDLPKWAQLDNS.

The active site involves Asp168.

It belongs to the pseudouridine synthase RluA family.

The protein resides in the cytoplasm. It is found in the mitochondrion. The catalysed reaction is uridine(31) in tRNA = pseudouridine(31) in tRNA. In terms of biological role, catalyzes the formation of pseudouridine at position 31 in the psi GC loop of tRNAS. The polypeptide is tRNA pseudouridine(31) synthase (PUS6) (Saccharomyces cerevisiae (strain ATCC 204508 / S288c) (Baker's yeast)).